A 479-amino-acid polypeptide reads, in one-letter code: Protoheme IX farnesyltransferase (479 aa).

The segment at 1 to 207 (MAEQTATTTS…AYIRLTKPRL (207 aa)) is unknown. Transmembrane regions (helical) follow at residues 20–40 (LLAG…TTAV), 64–84 (IGWL…CAVV), 98–118 (VLIT…VGAV), and 128–148 (LSVI…IALA). The span at 155-164 (TGDPTETQTT) shows a compositional bias: low complexity. The disordered stretch occupies residues 155–186 (TGDPTETQTTPSKPEPDQDLPPASEYDPDLPA). Helical transmembrane passes span 207-227 (LMWL…TTTG), 231-251 (PGIA…SGTF), 271-291 (LATD…LTVI), 303-322 (AAIL…TLLL), 324-344 (PNTV…ALIG), 345-365 (WVAV…VIFL), 402-422 (HVIW…TIEA), 423-443 (LGIV…YFAI), and 459-479 (HASN…TLVI). The tract at residues 208 to 476 (MWLLCLVASA…AVLIAIVFDT (269 aa)) is protoheme IX prenyltransferase.

The protein in the C-terminal section; belongs to the UbiA prenyltransferase family. Protoheme IX farnesyltransferase subfamily.

Its subcellular location is the cell membrane. The enzyme catalyses heme b + (2E,6E)-farnesyl diphosphate + H2O = Fe(II)-heme o + diphosphate. It participates in porphyrin-containing compound metabolism; heme O biosynthesis; heme O from protoheme: step 1/1. Functionally, converts heme B (protoheme IX) to heme O by substitution of the vinyl group on carbon 2 of heme B porphyrin ring with a hydroxyethyl farnesyl side group. This is Protoheme IX farnesyltransferase (ctaB) from Haloquadratum walsbyi (strain DSM 16790 / HBSQ001).